We begin with the raw amino-acid sequence, 349 residues long: tRNA uridine(34) hydroxylase (349 aa).

Residues 146 to 240 form the Rhodanese domain; the sequence is DDPDAVFIDM…YARRAREQGL (95 aa). The Cysteine persulfide intermediate role is filled by C200. Positions 316–328 are enriched in basic and acidic residues; it reads EEQRRRRAGRENG. Residues 316–349 form a disordered region; that stretch reads EEQRRRRAGRENGNKIFNKSRGRLNTKLGIPDPE.

It belongs to the TrhO family.

It carries out the reaction uridine(34) in tRNA + AH2 + O2 = 5-hydroxyuridine(34) in tRNA + A + H2O. Its function is as follows. Catalyzes oxygen-dependent 5-hydroxyuridine (ho5U) modification at position 34 in tRNAs. This Enterobacter sp. (strain 638) protein is tRNA uridine(34) hydroxylase.